Consider the following 479-residue polypeptide: Kynurenine 3-monooxygenase (479 aa).

The protein belongs to the aromatic-ring hydroxylase family. KMO subfamily. Requires FAD as cofactor.

The protein resides in the mitochondrion outer membrane. It carries out the reaction L-kynurenine + NADPH + O2 + H(+) = 3-hydroxy-L-kynurenine + NADP(+) + H2O. It participates in cofactor biosynthesis; NAD(+) biosynthesis; quinolinate from L-kynurenine: step 1/3. Its function is as follows. Catalyzes the hydroxylation of L-kynurenine (L-Kyn) to form 3-hydroxy-L-kynurenine (L-3OHKyn). Required for synthesis of quinolinic acid. This chain is Kynurenine 3-monooxygenase, found in Chaetomium globosum (strain ATCC 6205 / CBS 148.51 / DSM 1962 / NBRC 6347 / NRRL 1970) (Soil fungus).